The chain runs to 348 residues: Phospho-2-dehydro-3-deoxyheptonate aldolase, Trp-sensitive (348 aa).

It belongs to the class-I DAHP synthase family.

The catalysed reaction is D-erythrose 4-phosphate + phosphoenolpyruvate + H2O = 7-phospho-2-dehydro-3-deoxy-D-arabino-heptonate + phosphate. Its pathway is metabolic intermediate biosynthesis; chorismate biosynthesis; chorismate from D-erythrose 4-phosphate and phosphoenolpyruvate: step 1/7. Stereospecific condensation of phosphoenolpyruvate (PEP) and D-erythrose-4-phosphate (E4P) giving rise to 3-deoxy-D-arabino-heptulosonate-7-phosphate (DAHP). This Enterobacter agglomerans (Erwinia herbicola) protein is Phospho-2-dehydro-3-deoxyheptonate aldolase, Trp-sensitive (aroH).